We begin with the raw amino-acid sequence, 199 residues long: ATP-dependent Clp protease proteolytic subunit (199 aa).

Residue S97 is the Nucleophile of the active site. The active site involves H122.

The protein belongs to the peptidase S14 family. As to quaternary structure, fourteen ClpP subunits assemble into 2 heptameric rings which stack back to back to give a disk-like structure with a central cavity, resembling the structure of eukaryotic proteasomes.

It is found in the cytoplasm. It catalyses the reaction Hydrolysis of proteins to small peptides in the presence of ATP and magnesium. alpha-casein is the usual test substrate. In the absence of ATP, only oligopeptides shorter than five residues are hydrolyzed (such as succinyl-Leu-Tyr-|-NHMec, and Leu-Tyr-Leu-|-Tyr-Trp, in which cleavage of the -Tyr-|-Leu- and -Tyr-|-Trp bonds also occurs).. Cleaves peptides in various proteins in a process that requires ATP hydrolysis. Has a chymotrypsin-like activity. Plays a major role in the degradation of misfolded proteins. The polypeptide is ATP-dependent Clp protease proteolytic subunit (Pelobacter propionicus (strain DSM 2379 / NBRC 103807 / OttBd1)).